A 314-amino-acid polypeptide reads, in one-letter code: MLVSGRRRLLTALLQAQKWPFQPSRDMRLVQFRAPHLVGPHLGLETGNGGGVINLNAFDPTLPKTMTQFLEQGEATLSVARRALAAQLPVLPWSEVTFLAPVTWPDKVVCVGMNYVDHCKEQNVPVPKEPIIFSKFASSIVGPYDEVVLPPQSQEVDWEVELAVVIGKKGKHIKATDAMAHVAGFTVAHDVSARDWLTRRNGKQWLLGKTFDTFCPLGPALVTKDSVADPHNLKICCRVNGEVVQSSNTNQMVFKTEDLIAWVSQFVTFYPGDVILTGTPPGVGVFRKPPVFLKKGDEVQCEIEELGVIINKVV.

The transit peptide at 1-84 (MLVSGRRRLL…ATLSVARRAL (84 aa)) directs the protein to the mitochondrion. Glu159, Glu161, and Asp190 together coordinate Mg(2+).

Belongs to the FAH family. Requires Mg(2+) as cofactor. The cofactor is Mn(2+).

The protein resides in the mitochondrion. It carries out the reaction oxaloacetate = enol-oxaloacetate. Tautomerase that converts enol-oxaloacetate, a strong inhibitor of succinate dehydrogenase, to the physiological keto form of oxaloacetate. It is thereby required to maximize aerobic respiration efficiency by preventing succinate dehydrogenase inhibition. This is Oxaloacetate tautomerase FAHD2B, mitochondrial from Homo sapiens (Human).